The primary structure comprises 95 residues: Sec-independent protein translocase protein TatA (95 aa).

Residues 1-21 (MGSMSVWHWVIVAVVVMLLFG) traverse the membrane as a helical segment. Residues 42 to 95 (GMADDETQPNTATSVPPVGPNDPVRTLPHQGAPGTAPQPPHVQPHVPAGDHKAV) form a disordered region.

This sequence belongs to the TatA/E family. In terms of assembly, the Tat system comprises two distinct complexes: a TatABC complex, containing multiple copies of TatA, TatB and TatC subunits, and a separate TatA complex, containing only TatA subunits. Substrates initially bind to the TatABC complex, which probably triggers association of the separate TatA complex to form the active translocon.

Its subcellular location is the cell inner membrane. Functionally, part of the twin-arginine translocation (Tat) system that transports large folded proteins containing a characteristic twin-arginine motif in their signal peptide across membranes. TatA could form the protein-conducting channel of the Tat system. This Methylorubrum extorquens (strain PA1) (Methylobacterium extorquens) protein is Sec-independent protein translocase protein TatA.